Consider the following 613-residue polypeptide: Na(+)/H(+) antiporter NhaA 1 (613 aa).

Residues 1 to 23 (MTEASARTIGPLPSRFSRDPKTP) are disordered. Residues 1-408 (MTEASARTIG…DPARQDEARV (408 aa)) are na(+)/H(+) antiporter NhaA. A run of 11 helical transmembrane segments spans residues 29 to 49 (AAAALLLAFTVLAILWANSPW), 81 to 101 (GLMAFFFFIVGLEVKSEFVIG), 110 to 130 (AVPVVAAIAGLIVPAVIFLTF), 138 to 158 (QAWGVVISTDTAFLVGALAVI), 168 to 188 (IFLLTLAVVDDVGALGAIALF), 191 to 211 (DDLKLAPLAVAALLIAALAMV), 231 to 251 (IALYLAHVHPTLAGVAVAVLI), 300 to 320 (AVGPYVSFVVLPIFALANAGV), 337 to 357 (WGIVAGLVVGKFVGITAATAL), 377 to 397 (GGAALSGIGFTISLFIVDVAI), and 408 to 428 (VGVLIASVLAFTLSWALFRIT). Positions 409–613 (GVLIASVLAF…SLIRALEAGR (205 aa)) constitute a Thioredoxin domain.

The protein in the N-terminal section; belongs to the NhaA Na(+)/H(+) (TC 2.A.33) antiporter family.

The protein localises to the cell membrane. The catalysed reaction is Na(+)(in) + 2 H(+)(out) = Na(+)(out) + 2 H(+)(in). Its function is as follows. Na(+)/H(+) antiporter that extrudes sodium in exchange for external protons. The polypeptide is Na(+)/H(+) antiporter NhaA 1 (Mycobacterium sp. (strain KMS)).